An 88-amino-acid polypeptide reads, in one-letter code: Alpha-latrotoxin associated low molecular weight protein (88 aa).

Positions 1-18 (MSKLFFVAFLCLIISVFA) are cleaved as a signal peptide.

This sequence belongs to the arthropod CHH/MIH/GIH/VIH hormone family. In terms of tissue distribution, expressed by the venom gland.

It localises to the secreted. Its function is as follows. May increase the toxicity of alpha-latrotoxin and/or other venom components. Is non-toxic to mice and to the cockroach Periplaneta americana. This chain is Alpha-latrotoxin associated low molecular weight protein, found in Latrodectus hesperus (Western black widow spider).